The chain runs to 127 residues: 3-aminoacrylate deaminase RutC (127 aa).

It belongs to the RutC family.

It carries out the reaction (Z)-3-aminoacrylate + H2O + H(+) = 3-oxopropanoate + NH4(+). Its function is as follows. Involved in pyrimidine catabolism. Catalyzes the deamination of 3-aminoacrylate to malonic semialdehyde, a reaction that can also occur spontaneously. RutC may facilitate the reaction and modulate the metabolic fitness, rather than catalyzing essential functions. The protein is 3-aminoacrylate deaminase RutC of Pseudomonas syringae pv. syringae (strain B728a).